The chain runs to 134 residues: Fluoride-specific ion channel FluC (134 aa).

4 helical membrane-spanning segments follow: residues 7–27 (LAVA…TIMA), 38–58 (GTLL…IVLV), 69–89 (LFLF…AAES), and 110–130 (VGSL…LLGH). Na(+) is bound by residues G77 and T80.

This sequence belongs to the fluoride channel Fluc/FEX (TC 1.A.43) family.

It localises to the cell inner membrane. The catalysed reaction is fluoride(in) = fluoride(out). Its activity is regulated as follows. Na(+) is not transported, but it plays an essential structural role and its presence is essential for fluoride channel function. Fluoride-specific ion channel. Important for reducing fluoride concentration in the cell, thus reducing its toxicity. This Legionella pneumophila (strain Lens) protein is Fluoride-specific ion channel FluC.